A 426-amino-acid chain; its full sequence is Glutamyl-tRNA reductase (426 aa).

Residues Thr-51–Arg-54, Ser-110, Glu-115–Gln-117, and Gln-121 contribute to the substrate site. Catalysis depends on Cys-52, which acts as the Nucleophile. NADP(+) is bound at residue Gly-190–Ala-195.

The protein belongs to the glutamyl-tRNA reductase family. In terms of assembly, homodimer.

The catalysed reaction is (S)-4-amino-5-oxopentanoate + tRNA(Glu) + NADP(+) = L-glutamyl-tRNA(Glu) + NADPH + H(+). The protein operates within porphyrin-containing compound metabolism; protoporphyrin-IX biosynthesis; 5-aminolevulinate from L-glutamyl-tRNA(Glu): step 1/2. Functionally, catalyzes the NADPH-dependent reduction of glutamyl-tRNA(Glu) to glutamate 1-semialdehyde (GSA). The chain is Glutamyl-tRNA reductase from Desulfotalea psychrophila (strain LSv54 / DSM 12343).